The following is a 326-amino-acid chain: 5-dehydro-2-deoxygluconokinase (326 aa).

It belongs to the carbohydrate kinase PfkB family.

The enzyme catalyses 5-dehydro-2-deoxy-D-gluconate + ATP = 6-phospho-5-dehydro-2-deoxy-D-gluconate + ADP + H(+). Its pathway is polyol metabolism; myo-inositol degradation into acetyl-CoA; acetyl-CoA from myo-inositol: step 5/7. Catalyzes the phosphorylation of 5-dehydro-2-deoxy-D-gluconate (2-deoxy-5-keto-D-gluconate or DKG) to 6-phospho-5-dehydro-2-deoxy-D-gluconate (DKGP). In Shouchella clausii (strain KSM-K16) (Alkalihalobacillus clausii), this protein is 5-dehydro-2-deoxygluconokinase.